The primary structure comprises 513 residues: Probable metalloreductase AIM14 (513 aa).

Helical transmembrane passes span 22–42 (GYII…AHFL), 66–86 (PFWV…FTNV), 103–123 (LAFC…LLGQ), 138–158 (LIIL…TIHH), 166–186 (WANL…IVSS), 193–213 (FYSY…LLMI), and 219–239 (GVSD…ASRV). The region spanning 100-211 (LGRLAFCLVP…NFTVALFVLL (112 aa)) is the Ferric oxidoreductase domain. Residues 240-368 (YNGYSVPGLT…GIPLYEYFDN (129 aa)) enclose the FAD-binding FR-type domain.

It belongs to the ferric reductase (FRE) family. AIM14 subfamily.

Its subcellular location is the membrane. Functionally, probable cell surface metalloreductase. May be involved in iron or copper homeostasis. This is Probable metalloreductase AIM14 (AIM14) from Clavispora lusitaniae (strain ATCC 42720) (Yeast).